Reading from the N-terminus, the 313-residue chain is MTNEKLSLQDIILTLQQYWAKQGANLMQAYDNEVGAGTQSPYTFLRANGPEPWNAAYVQPSRRPADGRYGDNPNRLFQHHQFQVVMKPSPENIQELYLGSLEALGIKALEHDIRFVEDNWENPSMGAAGIGWEVWLDGMEVTQFTYFQQVGGIEVDSVTAEVTYGLERLASYIQNVPTVYDLEWGNGVLYGDIFKEPEFEHSKYAFEESNQDMLLRHFEEFEAEATRLLDLGLVHPAYDYILKSSHTFNLLDARGTVSVTERAGYLHRIRTMARKVSKVFIEERAKLGFPLLKDQTLRDKYLGKNGKYTKENA.

This sequence belongs to the class-II aminoacyl-tRNA synthetase family. Tetramer of two alpha and two beta subunits.

The protein localises to the cytoplasm. It catalyses the reaction tRNA(Gly) + glycine + ATP = glycyl-tRNA(Gly) + AMP + diphosphate. The sequence is that of Glycine--tRNA ligase alpha subunit from Leuconostoc mesenteroides subsp. mesenteroides (strain ATCC 8293 / DSM 20343 / BCRC 11652 / CCM 1803 / JCM 6124 / NCDO 523 / NBRC 100496 / NCIMB 8023 / NCTC 12954 / NRRL B-1118 / 37Y).